We begin with the raw amino-acid sequence, 89 residues long: Small ribosomal subunit protein uS17 (89 aa).

Belongs to the universal ribosomal protein uS17 family. Part of the 30S ribosomal subunit.

Functionally, one of the primary rRNA binding proteins, it binds specifically to the 5'-end of 16S ribosomal RNA. The sequence is that of Small ribosomal subunit protein uS17 from Leptospira interrogans serogroup Icterohaemorrhagiae serovar Lai (strain 56601).